The chain runs to 241 residues: Uridylate kinase (241 aa).

15–18 (KLSG) lines the ATP pocket. The interval 23 to 28 (GAEGFG) is involved in allosteric activation by GTP. G57 provides a ligand contact to UMP. G58 and R62 together coordinate ATP. UMP-binding positions include D77 and 138–145 (TGNPFFTT). ATP-binding residues include T165, Y171, and D174.

Belongs to the UMP kinase family. As to quaternary structure, homohexamer.

The protein resides in the cytoplasm. It catalyses the reaction UMP + ATP = UDP + ADP. The protein operates within pyrimidine metabolism; CTP biosynthesis via de novo pathway; UDP from UMP (UMPK route): step 1/1. Its activity is regulated as follows. Allosterically activated by GTP. Inhibited by UTP. Functionally, catalyzes the reversible phosphorylation of UMP to UDP. The chain is Uridylate kinase from Yersinia pseudotuberculosis serotype O:1b (strain IP 31758).